The primary structure comprises 368 residues: 4-hydroxy-3-methylbut-2-en-1-yl diphosphate synthase (flavodoxin) (368 aa).

The [4Fe-4S] cluster site is built by Cys-271, Cys-274, Cys-306, and Glu-313.

Belongs to the IspG family. It depends on [4Fe-4S] cluster as a cofactor.

The enzyme catalyses (2E)-4-hydroxy-3-methylbut-2-enyl diphosphate + oxidized [flavodoxin] + H2O + 2 H(+) = 2-C-methyl-D-erythritol 2,4-cyclic diphosphate + reduced [flavodoxin]. It participates in isoprenoid biosynthesis; isopentenyl diphosphate biosynthesis via DXP pathway; isopentenyl diphosphate from 1-deoxy-D-xylulose 5-phosphate: step 5/6. Functionally, converts 2C-methyl-D-erythritol 2,4-cyclodiphosphate (ME-2,4cPP) into 1-hydroxy-2-methyl-2-(E)-butenyl 4-diphosphate. This is 4-hydroxy-3-methylbut-2-en-1-yl diphosphate synthase (flavodoxin) from Haemophilus influenzae (strain 86-028NP).